The following is a 211-amino-acid chain: ATP-dependent dethiobiotin synthetase BioD (211 aa).

An ATP-binding site is contributed by Gly-13–Val-18. Thr-17 lines the Mg(2+) pocket. The active site involves Lys-33. Mg(2+) contacts are provided by Cys-47 and Glu-101. Residues Glu-101–Gly-104, Pro-185–Leu-187, and Asn-192 each bind ATP.

It belongs to the dethiobiotin synthetase family. As to quaternary structure, homodimer. Mg(2+) is required as a cofactor.

Its subcellular location is the cytoplasm. The enzyme catalyses (7R,8S)-7,8-diammoniononanoate + CO2 + ATP = (4R,5S)-dethiobiotin + ADP + phosphate + 3 H(+). It functions in the pathway cofactor biosynthesis; biotin biosynthesis; biotin from 7,8-diaminononanoate: step 1/2. Catalyzes a mechanistically unusual reaction, the ATP-dependent insertion of CO2 between the N7 and N8 nitrogen atoms of 7,8-diaminopelargonic acid (DAPA, also called 7,8-diammoniononanoate) to form a ureido ring. This Bradyrhizobium diazoefficiens (strain JCM 10833 / BCRC 13528 / IAM 13628 / NBRC 14792 / USDA 110) protein is ATP-dependent dethiobiotin synthetase BioD.